The chain runs to 223 residues: Ribose-5-phosphate isomerase A (223 aa).

Substrate is bound by residues 29–32 (TGST), 82–85 (DGAD), and 95–98 (KGGG). Residue Glu-104 is the Proton acceptor of the active site. Lys-122 is a substrate binding site.

This sequence belongs to the ribose 5-phosphate isomerase family. Homodimer.

It carries out the reaction aldehydo-D-ribose 5-phosphate = D-ribulose 5-phosphate. Its pathway is carbohydrate degradation; pentose phosphate pathway; D-ribose 5-phosphate from D-ribulose 5-phosphate (non-oxidative stage): step 1/1. Functionally, catalyzes the reversible conversion of ribose-5-phosphate to ribulose 5-phosphate. The sequence is that of Ribose-5-phosphate isomerase A from Neisseria meningitidis serogroup B (strain ATCC BAA-335 / MC58).